Here is a 282-residue protein sequence, read N- to C-terminus: 3-oxoadipate CoA-transferase subunit A (282 aa).

It belongs to the 3-oxoacid CoA-transferase subunit A family. In terms of assembly, heterotetramer composed of 2 A and 2 B subunits.

It carries out the reaction 3-oxoadipate + succinyl-CoA = 3-oxoadipyl-CoA + succinate. Its pathway is aromatic compound metabolism; beta-ketoadipate pathway; acetyl-CoA and succinyl-CoA from 3-oxoadipate: step 1/2. Catalyzes the CoA transfer from succinate to 3-oxoadipate (beta-ketoadipate). This chain is 3-oxoadipate CoA-transferase subunit A (catI), found in Pseudomonas knackmussii (strain DSM 6978 / CCUG 54928 / LMG 23759 / B13).